Here is a 301-residue protein sequence, read N- to C-terminus: Ribonuclease Z (301 aa).

The Zn(2+) site is built by His60, His62, Asp64, His65, His137, Asp207, and His265. Asp64 functions as the Proton acceptor in the catalytic mechanism.

The protein belongs to the RNase Z family. In terms of assembly, homodimer. Zn(2+) serves as cofactor.

The catalysed reaction is Endonucleolytic cleavage of RNA, removing extra 3' nucleotides from tRNA precursor, generating 3' termini of tRNAs. A 3'-hydroxy group is left at the tRNA terminus and a 5'-phosphoryl group is left at the trailer molecule.. Zinc phosphodiesterase, which displays some tRNA 3'-processing endonuclease activity. Probably involved in tRNA maturation, by removing a 3'-trailer from precursor tRNA. This chain is Ribonuclease Z, found in Exiguobacterium sibiricum (strain DSM 17290 / CCUG 55495 / CIP 109462 / JCM 13490 / 255-15).